The primary structure comprises 471 residues: Tryptophanase (471 aa).

Residue Lys270 is modified to N6-(pyridoxal phosphate)lysine.

It belongs to the beta-eliminating lyase family. Homotetramer. Pyridoxal 5'-phosphate serves as cofactor.

It catalyses the reaction L-tryptophan + H2O = indole + pyruvate + NH4(+). It functions in the pathway amino-acid degradation; L-tryptophan degradation via pyruvate pathway; indole and pyruvate from L-tryptophan: step 1/1. This Histophilus somni (strain 2336) (Haemophilus somnus) protein is Tryptophanase.